Here is a 316-residue protein sequence, read N- to C-terminus: Methionyl-tRNA formyltransferase (316 aa).

111 to 114 provides a ligand contact to (6S)-5,6,7,8-tetrahydrofolate; it reads GLLP.

This sequence belongs to the Fmt family.

The catalysed reaction is L-methionyl-tRNA(fMet) + (6R)-10-formyltetrahydrofolate = N-formyl-L-methionyl-tRNA(fMet) + (6S)-5,6,7,8-tetrahydrofolate + H(+). Attaches a formyl group to the free amino group of methionyl-tRNA(fMet). The formyl group appears to play a dual role in the initiator identity of N-formylmethionyl-tRNA by promoting its recognition by IF2 and preventing the misappropriation of this tRNA by the elongation apparatus. In Chlamydia trachomatis serovar L2b (strain UCH-1/proctitis), this protein is Methionyl-tRNA formyltransferase.